We begin with the raw amino-acid sequence, 146 residues long: Hemoglobin subunit delta (146 aa).

Positions 2-146 (HLTGEEKSAV…VATALAHKYH (145 aa)) constitute a Globin domain. Position 50 is a phosphoserine (S50). Positions 63 and 92 each coordinate heme b.

This sequence belongs to the globin family. As to quaternary structure, heterotetramer of two delta chains and two alpha chains. Red blood cells.

This is Hemoglobin subunit delta (HBD) from Leontocebus nigricollis (Black-mantled tamarin).